The sequence spans 596 residues: Alkaline phosphatase 4 (596 aa).

Positions 1–20 (MHCLVILGFLLGSLVAFSWA) are cleaved as a signal peptide. Mg(2+) is bound at residue D93. D93 is a binding site for Zn(2+). The active-site Phosphoserine intermediate is the S144. Mg(2+) contacts are provided by H202 and T204. N262 and N297 each carry an N-linked (GlcNAc...) asparagine glycan. Residue E369 coordinates Mg(2+). Residues D374 and H378 each coordinate Zn(2+). An N-linked (GlcNAc...) asparagine glycan is attached at N401. Residues D415 and H416 each contribute to the Zn(2+) site. N-linked (GlcNAc...) asparagine glycans are attached at residues N464 and N470. Zn(2+) is bound at residue H504. C539 and C550 form a disulfide bridge. Positions 548–566 (DSCEDHKDGQKDRPLDKPN) are enriched in basic and acidic residues. Positions 548-570 (DSCEDHKDGQKDRPLDKPNPKRN) are disordered. N570 carries the GPI-anchor amidated asparagine lipid modification. A helical membrane pass occupies residues 571-591 (GATVVGASLIPILTAATAAIL). Residues 571-596 (GATVVGASLIPILTAATAAILRGRGL) constitute a propeptide, removed in mature form.

Belongs to the alkaline phosphatase family. In terms of assembly, homodimer. Mg(2+) is required as a cofactor. The cofactor is Zn(2+). Ellipsoid body ring neurons in the adult brain and in the lower Malpighian tubule and ureter.

The protein resides in the cell membrane. The enzyme catalyses a phosphate monoester + H2O = an alcohol + phosphate. In terms of biological role, important role in neural and renal epithelial function. The protein is Alkaline phosphatase 4 of Drosophila melanogaster (Fruit fly).